The sequence spans 554 residues: (E)-beta-caryophyllene synthase (554 aa).

Mn(2+) is bound by residues Asp313 and Asp317. A DDXXD motif motif is present at residues 313-317 (DDTYD). 2 homodimerization regions span residues 319-325 (YGTLDEL) and 391-427 (EAQWFFSKYKPTMQEYMKVALLSSGYMMMTINSLAVI). 2 residues coordinate Mn(2+): Asp457 and Glu465.

This sequence belongs to the terpene synthase family. Homodimer. Mn(2+) serves as cofactor. Mg(2+) is required as a cofactor. In terms of tissue distribution, expressed in peltate glandular trichomes. Present at low levels in flowers, leaves and stems.

It catalyses the reaction (2E,6E)-farnesyl diphosphate = (-)-(E)-beta-caryophyllene + diphosphate. The enzyme catalyses (2E,6E)-farnesyl diphosphate = alpha-humulene + diphosphate. Its pathway is secondary metabolite biosynthesis; terpenoid biosynthesis. In terms of biological role, involved in the biosynthesis of phenolic sesquiterpenes natural products. Sesquiterpene synthase converting (2E,6E)-farnesyl diphosphate (FPP) to (E)-beta-caryophyllene and alpha-humulene. The sequence is that of (E)-beta-caryophyllene synthase from Origanum vulgare (Wild marjoram).